The chain runs to 212 residues: Large ribosomal subunit protein uL3 (212 aa).

Q152 carries the N5-methylglutamine modification.

The protein belongs to the universal ribosomal protein uL3 family. As to quaternary structure, part of the 50S ribosomal subunit. Forms a cluster with proteins L14 and L19. In terms of processing, methylated by PrmB.

One of the primary rRNA binding proteins, it binds directly near the 3'-end of the 23S rRNA, where it nucleates assembly of the 50S subunit. The sequence is that of Large ribosomal subunit protein uL3 from Marinomonas sp. (strain MWYL1).